A 938-amino-acid chain; its full sequence is AP-2 complex subunit alpha-2 (938 aa).

Residues 11–12 (RG), K43, Y53, and 57–61 (KYVCK) each bind a 1,2-diacyl-sn-glycero-3-phospho-(1D-myo-inositol-3,4,5-trisphosphate). The disordered stretch occupies residues 615 to 681 (LKKKKGPSTV…TGPPPSSGGG (67 aa)). Low complexity predominate over residues 646–667 (PASTSAASTPSPSADLLGLGAV). Positions 668 to 677 (PPAPTGPPPS) are enriched in pro residues.

The protein belongs to the adaptor complexes large subunit family. In terms of assembly, adaptor protein complex 2 (AP-2) is a heterotetramer composed of two large adaptins (alpha-type subunit AP2A1 or AP2A2 and beta-type subunit AP2B1), a medium adaptin (mu-type subunit AP2M1) and a small adaptin (sigma-type subunit AP2S1). Interacts with clathrin. Binds EPN1, EPS15, AMPH, SNAP91 and BIN1. Interacts with HIP1. Interacts with DGKD. Interacts with DENND1A, DENND1B and DENND1C. Interacts with FCHO1 and DAB2. Interacts with ATAT1; this interaction is required for efficient alpha-tubulin acetylation by ATAT1. Interacts with KIAA1107. Together with AP2B1 and AP2M1, it interacts with ADAM10; this interaction facilitates ADAM10 endocytosis from the plasma membrane during long-term potentiation in hippocampal neurons. Interacts with CLN3 (via dileucine motif). Interacts with ABCB11; this interaction regulates cell membrane expression of ABCB11 through its internalization in a clathrin-dependent manner and its subsequent degradation. Interacts with Cacfd1. Interacts with DNAJC6. Widely expressed.

It is found in the cell membrane. Its subcellular location is the membrane. It localises to the coated pit. Component of the adaptor protein complex 2 (AP-2). Adaptor protein complexes function in protein transport via transport vesicles in different membrane traffic pathways. Adaptor protein complexes are vesicle coat components and appear to be involved in cargo selection and vesicle formation. AP-2 is involved in clathrin-dependent endocytosis in which cargo proteins are incorporated into vesicles surrounded by clathrin (clathrin-coated vesicles, CCVs) which are destined for fusion with the early endosome. The clathrin lattice serves as a mechanical scaffold but is itself unable to bind directly to membrane components. Clathrin-associated adaptor protein (AP) complexes which can bind directly to both the clathrin lattice and to the lipid and protein components of membranes are considered to be the major clathrin adaptors contributing the CCV formation. AP-2 also serves as a cargo receptor to selectively sort the membrane proteins involved in receptor-mediated endocytosis. AP-2 seems to play a role in the recycling of synaptic vesicle membranes from the presynaptic surface. AP-2 recognizes Y-X-X-[FILMV] (Y-X-X-Phi) and [ED]-X-X-X-L-[LI] endocytosis signal motifs within the cytosolic tails of transmembrane cargo molecules. AP-2 may also play a role in maintaining normal post-endocytic trafficking through the ARF6-regulated, non-clathrin pathway. During long-term potentiation in hippocampal neurons, AP-2 is responsible for the endocytosis of ADAM10. The AP-2 alpha subunit binds polyphosphoinositide-containing lipids, positioning AP-2 on the membrane. The AP-2 alpha subunit acts via its C-terminal appendage domain as a scaffolding platform for endocytic accessory proteins. The AP-2 alpha and AP-2 sigma subunits are thought to contribute to the recognition of the [ED]-X-X-X-L-[LI] motif. This chain is AP-2 complex subunit alpha-2, found in Rattus norvegicus (Rat).